The primary structure comprises 700 residues: DNA ligase (700 aa).

NAD(+) contacts are provided by residues 61–65 (DAEYD), 110–111 (SL), and glutamate 141. The active-site N6-AMP-lysine intermediate is lysine 143. Positions 164, 202, 321, and 345 each coordinate NAD(+). 4 residues coordinate Zn(2+): cysteine 439, cysteine 442, cysteine 457, and cysteine 462. Positions 619–700 (AVSNKLAGLQ…EFLRLLEDSK (82 aa)) constitute a BRCT domain.

The protein belongs to the NAD-dependent DNA ligase family. LigA subfamily. Mg(2+) is required as a cofactor. It depends on Mn(2+) as a cofactor.

The enzyme catalyses NAD(+) + (deoxyribonucleotide)n-3'-hydroxyl + 5'-phospho-(deoxyribonucleotide)m = (deoxyribonucleotide)n+m + AMP + beta-nicotinamide D-nucleotide.. DNA ligase that catalyzes the formation of phosphodiester linkages between 5'-phosphoryl and 3'-hydroxyl groups in double-stranded DNA using NAD as a coenzyme and as the energy source for the reaction. It is essential for DNA replication and repair of damaged DNA. In Hydrogenobaculum sp. (strain Y04AAS1), this protein is DNA ligase.